Reading from the N-terminus, the 379-residue chain is F-box protein At1g67340 (379 aa).

One can recognise an F-box domain in the interval 41–92 (ADLLDSIPDDLVISILCKLGSTSRCPADFINVLLTCKRLKGLAMNPIVLSRL). His304, Cys307, Cys320, Cys323, Cys329, Cys333, His342, and Cys346 together coordinate Zn(2+). An MYND-type; atypical zinc finger spans residues 304-346 (HAGCGRPETRKHEFRRCSVCGVVNYCSRACQALDWKLRHKMDC). The disordered stretch occupies residues 358–379 (GGEGNVQIDGNGNGDNVLLPMS).

Part of a SCF (ASK-cullin-F-box) protein ligase complex. Interacts with SKP1A/ASK1, SKP1B/ASK2, ASK4, ASK11 and ASK13.

It is found in the nucleus. It participates in protein modification; protein ubiquitination. Component of SCF(ASK-cullin-F-box) E3 ubiquitin ligase complexes, which may mediate the ubiquitination and subsequent proteasomal degradation of target proteins. The polypeptide is F-box protein At1g67340 (Arabidopsis thaliana (Mouse-ear cress)).